We begin with the raw amino-acid sequence, 208 residues long: Holliday junction branch migration complex subunit RuvA (208 aa).

Residues 1–69 (MIGFLQGYVV…EDQMVLFGFA (69 aa)) form a domain I region. The domain II stretch occupies residues 70-148 (VVAERDLFRQ…EWRDQAGLKT (79 aa)). Residues 149-159 (LPSAGPIDSVQ) form a flexible linker region. The interval 159-208 (QEDVEMTLLALGYTSQEVMRALQAVGQNTALAKNSDTEAWIREAIAWLSQ) is domain III.

It belongs to the RuvA family. As to quaternary structure, homotetramer. Forms an RuvA(8)-RuvB(12)-Holliday junction (HJ) complex. HJ DNA is sandwiched between 2 RuvA tetramers; dsDNA enters through RuvA and exits via RuvB. An RuvB hexamer assembles on each DNA strand where it exits the tetramer. Each RuvB hexamer is contacted by two RuvA subunits (via domain III) on 2 adjacent RuvB subunits; this complex drives branch migration. In the full resolvosome a probable DNA-RuvA(4)-RuvB(12)-RuvC(2) complex forms which resolves the HJ.

It localises to the cytoplasm. The RuvA-RuvB-RuvC complex processes Holliday junction (HJ) DNA during genetic recombination and DNA repair, while the RuvA-RuvB complex plays an important role in the rescue of blocked DNA replication forks via replication fork reversal (RFR). RuvA specifically binds to HJ cruciform DNA, conferring on it an open structure. The RuvB hexamer acts as an ATP-dependent pump, pulling dsDNA into and through the RuvAB complex. HJ branch migration allows RuvC to scan DNA until it finds its consensus sequence, where it cleaves and resolves the cruciform DNA. The protein is Holliday junction branch migration complex subunit RuvA of Acaryochloris marina (strain MBIC 11017).